Consider the following 309-residue polypeptide: Probable ABC transporter permease protein YesP (309 aa).

6 helical membrane-spanning segments follow: residues 29-49 (FIIGFLCFTVIPMGASLFLSF), 84-104 (FTYVLAGVPLRLGFALFIAVI), 114-134 (IYRTLFYLPSIIGGSVAVAIM), 167-187 (ALWTLILLSVWQFGSSMLIFL), 217-237 (LPILTPIIFFNLVMQTISAFM), and 275-295 (YASAMAWVMLVIVGLITLILF). Positions 80–294 (LKVTFTYVLA…VIVGLITLIL (215 aa)) constitute an ABC transmembrane type-1 domain.

Belongs to the binding-protein-dependent transport system permease family. MalFG subfamily.

The protein resides in the cell membrane. Its function is as follows. Part of a binding-protein-dependent transport system. Probably responsible for the translocation of the substrate across the membrane. This Bacillus subtilis (strain 168) protein is Probable ABC transporter permease protein YesP (yesP).